Here is a 352-residue protein sequence, read N- to C-terminus: Zona pellucida-binding protein 2 (352 aa).

A signal peptide spans 1–28 (MAGGGGRPCSPQRALLGMVAIMAVVAEA). N-linked (GlcNAc...) asparagine glycans are attached at residues N110 and N309.

This sequence belongs to the zona pellucida-binding protein Sp38 family.

The protein resides in the secreted. Its subcellular location is the cytoplasmic vesicle. It is found in the secretory vesicle. The protein localises to the acrosome. Its function is as follows. May be implicated in the gamete interaction during fertilization. In Gallus gallus (Chicken), this protein is Zona pellucida-binding protein 2 (ZPBP2).